The sequence spans 254 residues: Triosephosphate isomerase (254 aa).

Substrate is bound at residue 9–11 (NWK). The active-site Electrophile is the H95. E167 acts as the Proton acceptor in catalysis. Substrate contacts are provided by residues G173, S213, and 234-235 (GG).

The protein belongs to the triosephosphate isomerase family. In terms of assembly, homodimer.

It is found in the cytoplasm. The enzyme catalyses D-glyceraldehyde 3-phosphate = dihydroxyacetone phosphate. The protein operates within carbohydrate biosynthesis; gluconeogenesis. It functions in the pathway carbohydrate degradation; glycolysis; D-glyceraldehyde 3-phosphate from glycerone phosphate: step 1/1. Functionally, involved in the gluconeogenesis. Catalyzes stereospecifically the conversion of dihydroxyacetone phosphate (DHAP) to D-glyceraldehyde-3-phosphate (G3P). The protein is Triosephosphate isomerase of Roseiflexus sp. (strain RS-1).